We begin with the raw amino-acid sequence, 87 residues long: Small ribosomal subunit protein bS20 (87 aa).

Residues 1–20 (MANHKSAEKRARQTIKKTER) form a disordered region.

It belongs to the bacterial ribosomal protein bS20 family.

In terms of biological role, binds directly to 16S ribosomal RNA. This chain is Small ribosomal subunit protein bS20, found in Campylobacter jejuni subsp. jejuni serotype O:2 (strain ATCC 700819 / NCTC 11168).